Reading from the N-terminus, the 327-residue chain is Lactosylceramide 4-alpha-galactosyltransferase (327 aa).

The DXD motif motif lies at 166-168 (DTD).

This sequence belongs to the glycosyltransferase 32 family.

The protein resides in the golgi apparatus membrane. The catalysed reaction is a beta-D-Gal-(1-&gt;4)-beta-D-Glc-(1&lt;-&gt;1)-Cer(d18:1(4E)) + UDP-alpha-D-galactose = a globoside Gb3Cer (d18:1(4E)) + UDP + H(+). It catalyses the reaction a beta-D-Gal-(1&lt;-&gt;1')-ceramide + UDP-alpha-D-galactose = alpha-D-Gal-(1-&gt;4)-beta-D-Gal-(1&lt;-&gt;1')-Cer + UDP + H(+). It functions in the pathway glycolipid biosynthesis. Catalyzes the transfer of galactose from UDP-alpha-D-galactose to lactosylceramide/beta-D-galactosyl-(1-&gt;4)-beta-D-glucosyl-(1&lt;-&gt;1)-ceramide(d18:1(4E)) to produce globotriaosylceramide/globoside Gb3Cer (d18:1(4E)). Also able to transfer galactose to galactosylceramide/beta-D-Gal-(1&lt;-&gt;1')-Cer. Globoside Gb3Cer is a glycosphingolipid of the globo serie, one of the major types of neutral root structures of glycosphingolipids, that constitute a significant portion of mammalian cell membranes. The polypeptide is Lactosylceramide 4-alpha-galactosyltransferase (A4GALT) (Gorilla gorilla gorilla (Western lowland gorilla)).